Reading from the N-terminus, the 147-residue chain is C-glycoside deglycosidase beta subunit (147 aa).

It belongs to the C-glycoside deglycosidase beta subunit family. As to quaternary structure, heterooctamer composed of four alpha subunits (DfgA) and four beta subunits (DfgB). Mn(2+) is required as a cofactor.

The catalysed reaction is 3''-dehydroisoorientin = 1,5-anhydro-D-erythro-hex-1-en-3-ulose + luteolin. It catalyses the reaction 3''-dehydroisovitexin = 1,5-anhydro-D-erythro-hex-1-en-3-ulose + apigenin. Activity is strongly reduced in the presence of chelating agents. Its function is as follows. Carbon-carbon bond-cleaving enzyme which participates in the metabolism of C-glycosides. Acts on the C6-glycosylated compounds 3''-dehydroisoorientin (3''-oxo-homoorientin) and 3''-dehydroisovitexin (3''-oxo-isovitexin). This Eubacterium cellulosolvens (strain ATCC 43171 / JCM 9499 / 6) (Cillobacterium cellulosolvens) protein is C-glycoside deglycosidase beta subunit.